A 583-amino-acid polypeptide reads, in one-letter code: 2-succinyl-5-enolpyruvyl-6-hydroxy-3-cyclohexene-1-carboxylate synthase (583 aa).

The protein belongs to the TPP enzyme family. MenD subfamily. In terms of assembly, homodimer. Requires Mg(2+) as cofactor. Mn(2+) serves as cofactor. The cofactor is thiamine diphosphate.

The enzyme catalyses isochorismate + 2-oxoglutarate + H(+) = 5-enolpyruvoyl-6-hydroxy-2-succinyl-cyclohex-3-ene-1-carboxylate + CO2. It participates in quinol/quinone metabolism; 1,4-dihydroxy-2-naphthoate biosynthesis; 1,4-dihydroxy-2-naphthoate from chorismate: step 2/7. The protein operates within cofactor biosynthesis; phylloquinone biosynthesis. Functionally, catalyzes the thiamine diphosphate-dependent decarboxylation of 2-oxoglutarate and the subsequent addition of the resulting succinic semialdehyde-thiamine pyrophosphate anion to isochorismate to yield 2-succinyl-5-enolpyruvyl-6-hydroxy-3-cyclohexene-1-carboxylate (SEPHCHC). The chain is 2-succinyl-5-enolpyruvyl-6-hydroxy-3-cyclohexene-1-carboxylate synthase from Trichormus variabilis (strain ATCC 29413 / PCC 7937) (Anabaena variabilis).